The following is a 137-amino-acid chain: Small ribosomal subunit protein uS12 (137 aa).

The tract at residues 1–26 is disordered; sequence MPTINQLVTKGRKRKASKTKSPALNQ.

Belongs to the universal ribosomal protein uS12 family. Part of the 30S ribosomal subunit. Contacts proteins S8 and S17. May interact with IF1 in the 30S initiation complex.

In terms of biological role, with S4 and S5 plays an important role in translational accuracy. Functionally, interacts with and stabilizes bases of the 16S rRNA that are involved in tRNA selection in the A site and with the mRNA backbone. Located at the interface of the 30S and 50S subunits, it traverses the body of the 30S subunit contacting proteins on the other side and probably holding the rRNA structure together. The combined cluster of proteins S8, S12 and S17 appears to hold together the shoulder and platform of the 30S subunit. The polypeptide is Small ribosomal subunit protein uS12 (Mycoplasmopsis pulmonis (strain UAB CTIP) (Mycoplasma pulmonis)).